We begin with the raw amino-acid sequence, 975 residues long: Probable dipeptidyl-aminopeptidase B (975 aa).

The span at 1–20 shows a compositional bias: basic and acidic residues; the sequence is MAEHGHNMWEEEPSKGRDSL. The tract at residues 1–111 is disordered; it reads MAEHGHNMWE…LSAASGSAGK (111 aa). Residues 1–125 are Cytoplasmic-facing; sequence MAEHGHNMWE…YRMMDRGLRR (125 aa). The segment covering 22–31 has biased composition (low complexity); it reads SDSSASTTSL. The segment covering 68-84 has biased composition (acidic residues); sequence LDDEDPLKDEASGDYDL. The helical; Signal-anchor for type II membrane protein transmembrane segment at 126–146 threads the bilayer; the sequence is VLIIASLVFVTAWVGGLFIYI. Topologically, residues 147-975 are vacuolar; the sequence is SHKSYLHGSE…IDNAKPQGKR (829 aa). N-linked (GlcNAc...) asparagine glycosylation is found at N207, N397, and N622. S826 functions as the Charge relay system in the catalytic mechanism. N885 carries N-linked (GlcNAc...) asparagine glycosylation. Active-site charge relay system residues include D903 and H936.

It belongs to the peptidase S9B family.

Its subcellular location is the vacuole membrane. The enzyme catalyses Release of an N-terminal dipeptide, Xaa-Yaa-|-Zaa-, from a polypeptide, preferentially when Yaa is Pro, provided Zaa is neither Pro nor hydroxyproline.. Functionally, type IV dipeptidyl-peptidase which removes N-terminal dipeptides sequentially from polypeptides having unsubstituted N-termini provided that the penultimate residue is proline. This Grosmannia clavigera (strain kw1407 / UAMH 11150) (Blue stain fungus) protein is Probable dipeptidyl-aminopeptidase B (DAPB).